We begin with the raw amino-acid sequence, 94 residues long: Small ribosomal subunit protein bS18 (94 aa).

Residues 1-12 (MSEQNSRPQNSE) show a composition bias toward low complexity. A disordered region spans residues 1 to 29 (MSEQNSRPQNSERPQRSRRPQGGPRRRRK). The segment covering 16-29 (RSRRPQGGPRRRRK) has biased composition (basic residues).

The protein belongs to the bacterial ribosomal protein bS18 family. As to quaternary structure, part of the 30S ribosomal subunit. Forms a tight heterodimer with protein bS6.

Its function is as follows. Binds as a heterodimer with protein bS6 to the central domain of the 16S rRNA, where it helps stabilize the platform of the 30S subunit. This Leuconostoc mesenteroides subsp. mesenteroides (strain ATCC 8293 / DSM 20343 / BCRC 11652 / CCM 1803 / JCM 6124 / NCDO 523 / NBRC 100496 / NCIMB 8023 / NCTC 12954 / NRRL B-1118 / 37Y) protein is Small ribosomal subunit protein bS18.